A 131-amino-acid polypeptide reads, in one-letter code: Small ribosomal subunit protein uS8 (131 aa).

Belongs to the universal ribosomal protein uS8 family. As to quaternary structure, part of the 30S ribosomal subunit. Contacts proteins S5 and S12.

Its function is as follows. One of the primary rRNA binding proteins, it binds directly to 16S rRNA central domain where it helps coordinate assembly of the platform of the 30S subunit. The polypeptide is Small ribosomal subunit protein uS8 (Dehalococcoides mccartyi (strain CBDB1)).